Consider the following 461-residue polypeptide: Cysteine--tRNA ligase (461 aa).

Cys-28 is a Zn(2+) binding site. The short motif at 30-40 (VTIYDLCHIGH) is the 'HIGH' region element. Positions 209, 234, and 238 each coordinate Zn(2+). The 'KMSKS' region motif lies at 266 to 270 (KMSKS). Lys-269 serves as a coordination point for ATP.

It belongs to the class-I aminoacyl-tRNA synthetase family. Monomer. Requires Zn(2+) as cofactor.

Its subcellular location is the cytoplasm. It carries out the reaction tRNA(Cys) + L-cysteine + ATP = L-cysteinyl-tRNA(Cys) + AMP + diphosphate. The sequence is that of Cysteine--tRNA ligase from Vibrio atlanticus (strain LGP32) (Vibrio splendidus (strain Mel32)).